We begin with the raw amino-acid sequence, 394 residues long: S-adenosylmethionine synthase 2 (394 aa).

E11 serves as a coordination point for Mg(2+). Residue H17 participates in ATP binding. E45 is a K(+) binding site. The L-methionine site is built by E58 and Q101. Residues D169–K171, S237–F240, D248, R254–K255, A271, K275, and K279 contribute to the ATP site. D248 contributes to the L-methionine binding site. K279 provides a ligand contact to L-methionine.

This sequence belongs to the AdoMet synthase family. In terms of assembly, homotetramer. Requires Mn(2+) as cofactor. It depends on Mg(2+) as a cofactor. Co(2+) serves as cofactor. K(+) is required as a cofactor.

It localises to the cytoplasm. The enzyme catalyses L-methionine + ATP + H2O = S-adenosyl-L-methionine + phosphate + diphosphate. It participates in amino-acid biosynthesis; S-adenosyl-L-methionine biosynthesis; S-adenosyl-L-methionine from L-methionine: step 1/1. In terms of biological role, catalyzes the formation of S-adenosylmethionine from methionine and ATP. The reaction comprises two steps that are both catalyzed by the same enzyme: formation of S-adenosylmethionine (AdoMet) and triphosphate, and subsequent hydrolysis of the triphosphate. The protein is S-adenosylmethionine synthase 2 (SAM2) of Hordeum vulgare (Barley).